We begin with the raw amino-acid sequence, 185 residues long: TRAF-interacting protein with FHA domain-containing protein A (185 aa).

Residue threonine 9 is modified to Phosphothreonine. The FHA domain maps to 48–104; the sequence is VKFGRNSNMCQYTFQDKQVSRVQFALQPFKQFNSSVLSFEIKNMSKKTSLMVDNQEL.

This sequence belongs to the TIFA family. In terms of assembly, homooligomer; homooligomerizes following phosphorylation at Thr-9. Interacts with IRAK1, TRAF2 and TRAF6. Interacts with TIFAB; binding to TIFAB inhibits TRAF6 activation, possibly by inducing a conformational change in TIFA. Interacts with ZCCHC11; binding to ZCCHC11 suppresses the TRAF6-dependent activation of NF-kappa-B. In terms of processing, phosphorylated at Thr-9 following detection of ADP-D-glycero-beta-D-manno-heptose (ADP-Heptose) by ALPK1. Phosphorylation at Thr-9 by ALPK1 leads to the formation of an intermolecular binding between the FHA domain and phosphorylated Thr-9, promoting TIFA oligomerization and TIFA-mediated NF-kappa-B activation.

The protein resides in the cytoplasm. In terms of biological role, adapter molecule that plays a key role in the activation of pro-inflammatory NF-kappa-B signaling following detection of bacterial pathogen-associated molecular pattern metabolites (PAMPs). Promotes activation of an innate immune response by inducing the oligomerization and polyubiquitination of TRAF6, which leads to the activation of TAK1 and IKK through a proteasome-independent mechanism. TIFA-dependent innate immune response is triggered by ADP-D-glycero-beta-D-manno-heptose (ADP-Heptose), a potent PAMP present in all Gram-negative and some Gram-positive bacteria: ADP-Heptose is recognized by ALPK1, which phosphorylates TIFA at Thr-9, leading to TIFA homooligomerization and subsequent activation of pro-inflammatory NF-kappa-B signaling. This Rattus norvegicus (Rat) protein is TRAF-interacting protein with FHA domain-containing protein A.